We begin with the raw amino-acid sequence, 85 residues long: RNA-binding protein Hfq (85 aa).

Positions 10 to 70 (DAFLNQVRKE…ISTIIPQRPV (61 aa)) constitute a Sm domain.

Belongs to the Hfq family. Homohexamer.

RNA chaperone that binds small regulatory RNA (sRNAs) and mRNAs to facilitate mRNA translational regulation in response to envelope stress, environmental stress and changes in metabolite concentrations. Also binds with high specificity to tRNAs. The chain is RNA-binding protein Hfq from Carboxydothermus hydrogenoformans (strain ATCC BAA-161 / DSM 6008 / Z-2901).